We begin with the raw amino-acid sequence, 513 residues long: Na(+)/H(+) antiporter NhaB (513 aa).

The next 12 helical transmembrane spans lie at 23–43 (LALI…PFVA), 52–72 (IFTL…LLAI), 97–117 (LLLM…LFIF), 120–140 (LLLS…AAAF), 144–164 (FLDA…FYGI), 202–222 (LMMH…VGEP), 238–258 (FFLR…LTCL), 303–323 (AIIG…VGLI), 348–368 (TESL…AVII), 391–411 (LFYI…VGTI), 447–467 (ATPN…APLI), and 475–495 (VWMA…CVEF).

It belongs to the NhaB Na(+)/H(+) (TC 2.A.34) antiporter family.

The protein resides in the cell inner membrane. The enzyme catalyses 2 Na(+)(in) + 3 H(+)(out) = 2 Na(+)(out) + 3 H(+)(in). Its function is as follows. Na(+)/H(+) antiporter that extrudes sodium in exchange for external protons. This Shigella flexneri serotype 5b (strain 8401) protein is Na(+)/H(+) antiporter NhaB.